Here is a 97-residue protein sequence, read N- to C-terminus: Large ribosomal subunit protein uL23 (97 aa).

The protein belongs to the universal ribosomal protein uL23 family. As to quaternary structure, part of the 50S ribosomal subunit. Contacts protein L29, and trigger factor when it is bound to the ribosome.

Functionally, one of the early assembly proteins it binds 23S rRNA. One of the proteins that surrounds the polypeptide exit tunnel on the outside of the ribosome. Forms the main docking site for trigger factor binding to the ribosome. This chain is Large ribosomal subunit protein uL23, found in Mesorhizobium japonicum (strain LMG 29417 / CECT 9101 / MAFF 303099) (Mesorhizobium loti (strain MAFF 303099)).